The primary structure comprises 527 residues: Ribosomal protein S6 kinase beta-1 (527 aa).

The tract at residues 1-54 (MRRRRRRDGFYPAPDFRDREAEDMAGVFDIDLDQPEDAGSEDELEEGGQLNESM) is disordered. The short motif at 28–32 (FDIDL) is the TOS motif element. Residues 30–46 (IDLDQPEDAGSEDELEE) show a composition bias toward acidic residues. The Protein kinase domain maps to 91-352 (FELLRVLGKG…AGEVQAHPFF (262 aa)). ATP-binding positions include 97-105 (LGKGGYGKV) and Lys123. Residue Asp218 is the Proton acceptor of the active site. The residue at position 252 (Thr252) is a Phosphothreonine; by PDPK1. The AGC-kinase C-terminal domain maps to 353-423 (RHINWEELLA…VAPSVLESVK (71 aa)). Residue Ser394 is modified to Phosphoserine. Thr412 is modified (phosphothreonine; by MTOR, NEK6 and NEK7). Residues 424–527 (EKFSFEPKIR…PEHLRMNLEL (104 aa)) are autoinhibitory domain. Phosphoserine is present on residues Ser434 and Ser441. The residue at position 444 (Thr444) is a Phosphothreonine. Residues Ser447 and Ser452 each carry the phosphoserine modification. Lys516 carries the N6-acetyllysine modification.

The protein belongs to the protein kinase superfamily. AGC Ser/Thr protein kinase family. S6 kinase subfamily. Interacts with PPP1R9A/neurabin-1. Interacts with RPTOR. Interacts with IRS1. Interacts with EIF3B and EIF3C. Interacts with TRAF4. Interacts with POLDIP3. Interacts (via N-terminus) with IER5. Phosphorylation at Thr-412 is regulated by mTORC1. The phosphorylation at this site is maintained by an agonist-dependent autophosphorylation mechanism. Activated by phosphorylation at Thr-252 by PDPK1. Dephosphorylation by PPP1CC at Thr-412 in mitochondrion.

It is found in the cytoplasm. Its subcellular location is the synapse. It localises to the synaptosome. The protein resides in the mitochondrion outer membrane. The protein localises to the mitochondrion. It catalyses the reaction L-seryl-[protein] + ATP = O-phospho-L-seryl-[protein] + ADP + H(+). The catalysed reaction is L-threonyl-[protein] + ATP = O-phospho-L-threonyl-[protein] + ADP + H(+). With respect to regulation, inactivated by binding to URI1. Activation requires multiple phosphorylation events on serine/threonine residues. Activation appears to be first mediated by phosphorylation of multiple sites in the autoinhibitory domain, which facilitates phosphorylation at Thr-412, disrupting the autoinhibitory mechanism and allowing phosphorylation of Thr-252 by PDPK1. The active conformation of the kinase is believed to be stabilized by a mechanism involving three conserved phosphorylation sites located in the kinase domain activation loop (Thr-252) and in the AGC-kinase C-terminal domain (Ser-394 in the middle of the tail/linker region and Thr-412 within a hydrophobic motif at its end). Activated by mTORC1; isoform Alpha I and isoform Alpha II are sensitive to rapamycin, which inhibits activating phosphorylation at Thr-412. Activated by PDPK1. Its function is as follows. Serine/threonine-protein kinase that acts downstream of mTOR signaling in response to growth factors and nutrients to promote cell proliferation, cell growth and cell cycle progression. Regulates protein synthesis through phosphorylation of EIF4B, RPS6 and EEF2K, and contributes to cell survival by repressing the pro-apoptotic function of BAD. Under conditions of nutrient depletion, the inactive form associates with the EIF3 translation initiation complex. Upon mitogenic stimulation, phosphorylation by the mechanistic target of rapamycin complex 1 (mTORC1) leads to dissociation from the EIF3 complex and activation. The active form then phosphorylates and activates several substrates in the pre-initiation complex, including the EIF2B complex and the cap-binding complex component EIF4B. Also controls translation initiation by phosphorylating a negative regulator of EIF4A, PDCD4, targeting it for ubiquitination and subsequent proteolysis. Promotes initiation of the pioneer round of protein synthesis by phosphorylating POLDIP3/SKAR. In response to IGF1, activates translation elongation by phosphorylating EEF2 kinase (EEF2K), which leads to its inhibition and thus activation of EEF2. Also plays a role in feedback regulation of mTORC2 by mTORC1 by phosphorylating MAPKAP1/SIN1, MTOR and RICTOR, resulting in the inhibition of mTORC2 and AKT1 signaling. Also involved in feedback regulation of mTORC1 and mTORC2 by phosphorylating DEPTOR. Mediates cell survival by phosphorylating the pro-apoptotic protein BAD and suppressing its pro-apoptotic function. Phosphorylates mitochondrial URI1 leading to dissociation of a URI1-PPP1CC complex. The free mitochondrial PPP1CC can then dephosphorylate RPS6KB1 at Thr-412, which is proposed to be a negative feedback mechanism for the RPS6KB1 anti-apoptotic function. Mediates TNF-alpha-induced insulin resistance by phosphorylating IRS1 at multiple serine residues, resulting in accelerated degradation of IRS1. In cells lacking functional TSC1-2 complex, constitutively phosphorylates and inhibits GSK3B. May be involved in cytoskeletal rearrangement through binding to neurabin. Phosphorylates and activates the pyrimidine biosynthesis enzyme CAD, downstream of MTOR. Following activation by mTORC1, phosphorylates EPRS and thereby plays a key role in fatty acid uptake by adipocytes and also most probably in interferon-gamma-induced translation inhibition. The protein is Ribosomal protein S6 kinase beta-1 (RPS6KB1) of Bos taurus (Bovine).